A 166-amino-acid chain; its full sequence is Putative universal stress protein SA1532 (166 aa).

It belongs to the universal stress protein A family.

The protein localises to the cytoplasm. In Staphylococcus aureus (strain N315), this protein is Putative universal stress protein SA1532.